The sequence spans 620 residues: MSFDIAKYPTLALVDSTQELRLLPKESLPKLCDELRRYLLDSVSRSSGHFASGLGTVELTVALHYVYNTPFDQLIWDVGHQAYPHKILTGRRDKIGTIRQKGGLHPFPWRGESEYDVLSVGHSSTSISAGIGIAVAAEKEGKDRRTVCVIGDGAITAGMAFEAMNHAGDIRPDMLVILNDNEMSISENVGALNNHLARLLSGKLYSSLREGGKKVFSGVPPIKELLKRTEEHIKGMVVPGTLFEELGFNYIGPVDGHDVMGLISTLKNMRDLKGPQFLHIMTKKGRGYEPAEKDPITFHAVPKFDPSSGCLPKSSGGLPGYSKIFGDWLCETAAKDSKLMAITPAMREGSGMVEFSRKFPDRYFDVAIAEQHAVTFAAGLAIGGYKPVVAIYSTFLQRAYDQVIHDVAIQKLPVMFAIDRAGIVGADGQTHQGAFDLSYLRCIPDMVIMTPSDENECRQMLFTGYHYNDGPTAVRYPRGNAQGVALTPLEKLPIGKGLVKRHGEKLAILNFGTLMPEAAKVAEALNATLVDMRFVKPLDDTLILEMAAQHDALVTLEENAIMGGAGSGVNEVLMAHRKPVPVLNIGLPDFFIPQGTQEEARAELGLDAAGIEAKIKAWLA.

Residues His-80 and 121-123 (GHS) contribute to the thiamine diphosphate site. Residue Asp-152 coordinates Mg(2+). Residues 153-154 (GA), Asn-181, Tyr-288, and Glu-370 each bind thiamine diphosphate. Asn-181 is a binding site for Mg(2+).

Belongs to the transketolase family. DXPS subfamily. In terms of assembly, homodimer. It depends on Mg(2+) as a cofactor. Thiamine diphosphate is required as a cofactor.

The enzyme catalyses D-glyceraldehyde 3-phosphate + pyruvate + H(+) = 1-deoxy-D-xylulose 5-phosphate + CO2. Its pathway is metabolic intermediate biosynthesis; 1-deoxy-D-xylulose 5-phosphate biosynthesis; 1-deoxy-D-xylulose 5-phosphate from D-glyceraldehyde 3-phosphate and pyruvate: step 1/1. Catalyzes the acyloin condensation reaction between C atoms 2 and 3 of pyruvate and glyceraldehyde 3-phosphate to yield 1-deoxy-D-xylulose-5-phosphate (DXP). The chain is 1-deoxy-D-xylulose-5-phosphate synthase from Salmonella typhi.